We begin with the raw amino-acid sequence, 341 residues long: Phosphate acyltransferase (341 aa).

The protein belongs to the PlsX family. As to quaternary structure, homodimer. Probably interacts with PlsY.

It is found in the cytoplasm. The enzyme catalyses a fatty acyl-[ACP] + phosphate = an acyl phosphate + holo-[ACP]. The protein operates within lipid metabolism; phospholipid metabolism. Its function is as follows. Catalyzes the reversible formation of acyl-phosphate (acyl-PO(4)) from acyl-[acyl-carrier-protein] (acyl-ACP). This enzyme utilizes acyl-ACP as fatty acyl donor, but not acyl-CoA. In Vibrio atlanticus (strain LGP32) (Vibrio splendidus (strain Mel32)), this protein is Phosphate acyltransferase.